The chain runs to 219 residues: Orotate phosphoribosyltransferase (219 aa).

Lys26 is a binding site for 5-phospho-alpha-D-ribose 1-diphosphate. Position 34–35 (34–35) interacts with orotate; that stretch reads FF. 5-phospho-alpha-D-ribose 1-diphosphate contacts are provided by residues 72–73, Arg98, Lys99, Lys102, His104, and 124–132; these read YK and DDVITAGTA. Residues Thr128 and Arg156 each coordinate orotate.

It belongs to the purine/pyrimidine phosphoribosyltransferase family. PyrE subfamily. As to quaternary structure, homodimer. It depends on Mg(2+) as a cofactor.

It carries out the reaction orotidine 5'-phosphate + diphosphate = orotate + 5-phospho-alpha-D-ribose 1-diphosphate. Its pathway is pyrimidine metabolism; UMP biosynthesis via de novo pathway; UMP from orotate: step 1/2. Catalyzes the transfer of a ribosyl phosphate group from 5-phosphoribose 1-diphosphate to orotate, leading to the formation of orotidine monophosphate (OMP). This chain is Orotate phosphoribosyltransferase, found in Xylella fastidiosa (strain M23).